Consider the following 346-residue polypeptide: Isopentenyl-diphosphate delta-isomerase (346 aa).

9-10 (RK) is a binding site for substrate. Residues S67, 68–70 (SMT), S98, and N127 contribute to the FMN site. 98–100 (SQR) lines the substrate pocket. Residue Q162 coordinates substrate. Residue E163 coordinates Mg(2+). FMN contacts are provided by residues K194, T224, 274–276 (GIR), and 295–296 (AA).

The protein belongs to the IPP isomerase type 2 family. As to quaternary structure, homooctamer. Dimer of tetramers. Requires FMN as cofactor. NADPH serves as cofactor. Mg(2+) is required as a cofactor.

It localises to the cytoplasm. The enzyme catalyses isopentenyl diphosphate = dimethylallyl diphosphate. Its function is as follows. Involved in the biosynthesis of isoprenoids. Catalyzes the 1,3-allylic rearrangement of the homoallylic substrate isopentenyl (IPP) to its allylic isomer, dimethylallyl diphosphate (DMAPP). The protein is Isopentenyl-diphosphate delta-isomerase of Stutzerimonas stutzeri (strain A1501) (Pseudomonas stutzeri).